A 118-amino-acid polypeptide reads, in one-letter code: Large ribosomal subunit protein uL18 (118 aa).

Belongs to the universal ribosomal protein uL18 family. In terms of assembly, part of the 50S ribosomal subunit; part of the 5S rRNA/L5/L18/L25 subcomplex. Contacts the 5S and 23S rRNAs.

In terms of biological role, this is one of the proteins that bind and probably mediate the attachment of the 5S RNA into the large ribosomal subunit, where it forms part of the central protuberance. This is Large ribosomal subunit protein uL18 from Dichelobacter nodosus (strain VCS1703A).